The primary structure comprises 465 residues: Phospholipase A1-II 5 (465 aa).

Catalysis depends on Ser233, which acts as the Acyl-ester intermediate. Residues Ser233, Asp297, and His336 each act as charge relay system in the active site.

The protein belongs to the AB hydrolase superfamily. Lipase family.

Its subcellular location is the cytoplasm. Acylhydrolase that catalyzes the hydrolysis of phospholipids at the sn-1 position. This Oryza sativa subsp. japonica (Rice) protein is Phospholipase A1-II 5.